Reading from the N-terminus, the 192-residue chain is Small ribosomal subunit protein uS5 (192 aa).

Residues 1 to 21 form a disordered region; sequence MAAERERGGRERGGRDRDERD. The S5 DRBM domain occupies 24 to 87; it reads FVDKLVHINR…DSAKRNLTRV (64 aa).

Belongs to the universal ribosomal protein uS5 family. As to quaternary structure, part of the 30S ribosomal subunit. Contacts proteins S4 and S8.

With S4 and S12 plays an important role in translational accuracy. Functionally, located at the back of the 30S subunit body where it stabilizes the conformation of the head with respect to the body. This Afipia carboxidovorans (strain ATCC 49405 / DSM 1227 / KCTC 32145 / OM5) (Oligotropha carboxidovorans) protein is Small ribosomal subunit protein uS5.